We begin with the raw amino-acid sequence, 429 residues long: GDP-fucose protein O-fucosyltransferase 2 (429 aa).

The N-terminal stretch at 1–21 (MATLSFVFLLLGAVSWPPASA) is a signal peptide. Residue 53–57 (PEGFN) coordinates GDP-beta-L-fucose. Glu54 functions as the Proton acceptor in the catalytic mechanism. Cysteines 161 and 192 form a disulfide. Residues Asn189, Asn209, and Asn259 are each glycosylated (N-linked (GlcNAc...) asparagine). GDP-beta-L-fucose contacts are provided by residues 292–294 (HLR), Asp371, and 388–389 (TF). The cysteines at positions 412 and 419 are disulfide-linked.

This sequence belongs to the glycosyltransferase 68 family.

The protein localises to the endoplasmic reticulum. It localises to the golgi apparatus. The enzyme catalyses L-seryl-[protein] + GDP-beta-L-fucose = 3-O-(alpha-L-fucosyl)-L-seryl-[protein] + GDP + H(+). It catalyses the reaction L-threonyl-[protein] + GDP-beta-L-fucose = 3-O-(alpha-L-fucosyl)-L-threonyl-[protein] + GDP + H(+). The protein operates within protein modification; protein glycosylation. Functionally, catalyzes the reaction that attaches fucose through an O-glycosidic linkage to a conserved serine or threonine residue in the consensus sequence C1-X-X-S/T-C2 of thrombospondin type I repeats (TSRs) where C1 and C2 are the first and second cysteines of the repeat, respectively. O-fucosylates members of several protein families including the ADAMTS, the thrombospondin (TSP) and spondin families. Required for the proper secretion of ADAMTS family members such as ADAMTSL1 and ADAMTS13. The O-fucosylation of TSRs is also required for restricting epithelial to mesenchymal transition (EMT), maintaining the correct patterning of mesoderm and localization of the definite endoderm. This Pan troglodytes (Chimpanzee) protein is GDP-fucose protein O-fucosyltransferase 2 (POFUT2).